The chain runs to 226 residues: Probable proteasome subunit beta type-7 (226 aa).

Belongs to the peptidase T1B family. As to quaternary structure, the 26S proteasome consists of a 20S proteasome core and two 19S regulatory subunits. The 20S proteasome core is composed of 28 subunits that are arranged in four stacked rings, resulting in a barrel-shaped structure. The two end rings are each formed by seven alpha subunits, and the two central rings are each formed by seven beta subunits. The catalytic chamber with the active sites is on the inside of the barrel.

Its subcellular location is the cytoplasm. It is found in the nucleus. Non-catalytic component of the proteasome which degrades poly-ubiquitinated proteins in the cytoplasm and in the nucleus. It is essential for the regulated turnover of proteins and for the removal of misfolded proteins. The proteasome is a multicatalytic proteinase complex that is characterized by its ability to cleave peptides with Arg, Phe, Tyr, Leu, and Glu adjacent to the leaving group at neutral or slightly basic pH. It has an ATP-dependent proteolytic activity. The protein is Probable proteasome subunit beta type-7 (PRE4) of Encephalitozoon cuniculi (strain GB-M1) (Microsporidian parasite).